A 152-amino-acid chain; its full sequence is Large ribosomal subunit protein uL15 (152 aa).

The disordered stretch occupies residues 1-79; that stretch reads MRLNELSPPP…GRHTPAHPKV (79 aa). Residues 22-35 show a composition bias toward gly residues; that stretch reads GEGSGYGKTSGRGQ.

This sequence belongs to the universal ribosomal protein uL15 family. In terms of assembly, part of the 50S ribosomal subunit.

Binds to the 23S rRNA. In Rubrobacter xylanophilus (strain DSM 9941 / JCM 11954 / NBRC 16129 / PRD-1), this protein is Large ribosomal subunit protein uL15.